Here is a 765-residue protein sequence, read N- to C-terminus: MATDLSVIMILTFALWVTSPLHELQSTAAFSQTTEKINSNWEPGVNVDLAVTMQRHHLQQLFYRYGENDSLSVEGFRKLLQNIGIDKIKRVHIHHDHEHHADHEHHSDHEHHSDHEHHSDHEHHSDHEHHSDHEHHSHRSHTVAGKNNRKAFCPDLDSDNSGKNPRTSLGKGSRPAEHMNGRRNIKESASSSEVTSAVYNAVSEGTRFVETIETPKPGRRTKDVNPSTPPSITEKSRVGRLSRLARKKSNESVSEPRKSFMYSRNTNDNIQECFNTTKLLTSHGMSIQALLNATEFNYLCPAIINQIDARACLIHTASEKKAEIPPKTYSLQIAWLGGFIAISIISFLSLLGVILVPLMNRVFFKFLLSFLVALAVGTLSGDALLHLLPHSHASHQHSHSHEEPAMEMKRGPLFSHLSAQNIEESSYFDSTWKGLTALGGLYFMFLVEHVLTLIKQFKDKKKKNQKKPENDEDVESKKQLSKYDSQLSSNEEKVDPGERPESYLRADSQEPSPFDSQQPTMLEEEEVMIAHAHPQEVYNEYVPRGCKNKCHSHFHDTLGQSDDLIHHHHDYHHILHHHHHQNHHPHSHSQRYSREELKDAGIATLAWMVIMGDGLHNFSDGLAIGAAFTEGLSSGLSTSVAVFCHELPHELGDFAVLLKAGMTVKQAVLYNALSAMLAYLGMATGIFIGHYAENVSMWIFALTAGLFMYVALVDMVPEMLHNDASDHGCSRWGYFFLQNAGILLGFGIMLLISIFEHKIVFRINF.

An N-terminal signal peptide occupies residues 1–20 (MATDLSVIMILTFALWVTSP). Topologically, residues 21–335 (LHELQSTAAF…PKTYSLQIAW (315 aa)) are extracellular. N-linked (GlcNAc...) asparagine glycosylation occurs at Asn-68. Composition is skewed to basic and acidic residues over residues 96-135 (DHEHHADHEHHSDHEHHSDHEHHSDHEHHSDHEHHSDHEH) and 174-186 (RPAEHMNGRRNIK). 2 disordered regions span residues 96–196 (DHEH…EVTS) and 209–257 (VETI…SEPR). Residues 187 to 196 (ESASSSEVTS) show a composition bias toward low complexity. The span at 224–233 (VNPSTPPSIT) shows a compositional bias: polar residues. A compositionally biased stretch (basic residues) spans 238–247 (VGRLSRLARK). Positions 248-257 (KSNESVSEPR) are enriched in basic and acidic residues. N-linked (GlcNAc...) asparagine glycans are attached at residues Asn-250, Asn-275, and Asn-292. The helical transmembrane segment at 336 to 356 (LGGFIAISIISFLSLLGVILV) threads the bilayer. Topologically, residues 357–365 (PLMNRVFFK) are cytoplasmic. A helical transmembrane segment spans residues 366–386 (FLLSFLVALAVGTLSGDALLH). At 387–433 (LLPHSHASHQHSHSHEEPAMEMKRGPLFSHLSAQNIEESSYFDSTWK) the chain is on the extracellular side. Residues 434 to 454 (GLTALGGLYFMFLVEHVLTLI) form a helical membrane-spanning segment. The Cytoplasmic portion of the chain corresponds to 455–667 (KQFKDKKKKN…LKAGMTVKQA (213 aa)). Positions 458-519 (KDKKKKNQKK…EPSPFDSQQP (62 aa)) are disordered. A coiled-coil region spans residues 475 to 495 (ESKKQLSKYDSQLSSNEEKVD). Phosphoserine is present on residues Ser-481 and Ser-488. Over residues 490 to 508 (NEEKVDPGERPESYLRADS) the composition is skewed to basic and acidic residues. The span at 509–519 (QEPSPFDSQQP) shows a compositional bias: polar residues. A helical membrane pass occupies residues 668–688 (VLYNALSAMLAYLGMATGIFI). The Extracellular segment spans residues 689–696 (GHYAENVS). Residue Asn-694 is glycosylated (N-linked (GlcNAc...) asparagine). The helical transmembrane segment at 697–717 (MWIFALTAGLFMYVALVDMVP) threads the bilayer. The Cytoplasmic segment spans residues 718–734 (EMLHNDASDHGCSRWGY). A helical transmembrane segment spans residues 735-755 (FFLQNAGILLGFGIMLLISIF). Topologically, residues 756 to 765 (EHKIVFRINF) are extracellular.

The protein belongs to the ZIP transporter (TC 2.A.5) family. Interacts with SLC39A10; which triggers cells to undergo EMT and mitosis. Found in a complex with SLC39A6, SLC39A10 and with the 'Ser-727' phosphorylated form of STAT3 throughout mitosis. Found in a complex with SLC39A6, SLC39A10 and with NCAM1; this complex controls NCAM1 phosphorylation and integration into focal adhesion complexes during epithelial-to-mesenchymal transition (EMT). Found in a complex with SLC39A6, SLC39A10 and with GSK3B that controls NCAM1 phosphorylation. Post-translationally, cleaved on the N-terminus before locating to the plasma membrane. N-glycosylated. In terms of processing, phosphorylated by ZAP70 in response to TCR stimulation leading to its activation. As to expression, highly expressed in the brain and testis. In the brain strongly expressed in the CA1 and CA3 regions, Purkinje cells in cerebellum and dentate gyrus in hippocampus. In testis found in spermatids or mature sperms in the central areas of seminiferous tubules.

The protein localises to the cell membrane. The protein resides in the cell projection. It is found in the lamellipodium membrane. It localises to the membrane raft. Its subcellular location is the apical cell membrane. It carries out the reaction Zn(2+)(in) = Zn(2+)(out). Zinc-influx transporter which plays a role in zinc homeostasis and in the induction of epithelial-to-mesenchymal transition (EMT). When associated with SLC39A10, the heterodimer formed by SLC39A10 and SLC39A6 mediates cellular zinc uptake to trigger cells to undergo epithelial- to-mesenchymal transition (EMT). The SLC39A10-SLC39A6 heterodimer also controls NCAM1 phosphorylation and its integration into focal adhesion complexes during EMT. Zinc influx inactivates GSK3B, enabling unphosphorylated SNAI1 in the nucleus to down-regulate adherence genes such as E-cadherin, causing loss of cell adherence. In addition, the SLC39A10-SLC39A6 heterodimer plays an essentiel role in initiating mitosis by importing zinc into cells to initiate a pathway resulting in the onset of mitosis. Participates in the T-cell receptor signaling regulation by mediating cellular zinc uptake into activated lymphocytes. Regulates the zinc influx necessary for proper meiotic progression to metaphase II (MII) that allows the oocyte-to-egg transition. This is Zinc transporter ZIP6 from Mus musculus (Mouse).